We begin with the raw amino-acid sequence, 691 residues long: Elongation factor G (691 aa).

In terms of domain architecture, tr-type G spans 8-283; the sequence is KKVRNIGIAA…AVVAYLPAPD (276 aa). GTP-binding positions include 17–24, 81–85, and 135–138; these read AHIDAGKT, DTPGH, and NKMD.

Belongs to the TRAFAC class translation factor GTPase superfamily. Classic translation factor GTPase family. EF-G/EF-2 subfamily.

Its subcellular location is the cytoplasm. Catalyzes the GTP-dependent ribosomal translocation step during translation elongation. During this step, the ribosome changes from the pre-translocational (PRE) to the post-translocational (POST) state as the newly formed A-site-bound peptidyl-tRNA and P-site-bound deacylated tRNA move to the P and E sites, respectively. Catalyzes the coordinated movement of the two tRNA molecules, the mRNA and conformational changes in the ribosome. The protein is Elongation factor G of Campylobacter jejuni subsp. doylei (strain ATCC BAA-1458 / RM4099 / 269.97).